The following is a 179-amino-acid chain: ATP synthase subunit delta (179 aa).

It belongs to the ATPase delta chain family. F-type ATPases have 2 components, F(1) - the catalytic core - and F(0) - the membrane proton channel. F(1) has five subunits: alpha(3), beta(3), gamma(1), delta(1), epsilon(1). F(0) has three main subunits: a(1), b(2) and c(10-14). The alpha and beta chains form an alternating ring which encloses part of the gamma chain. F(1) is attached to F(0) by a central stalk formed by the gamma and epsilon chains, while a peripheral stalk is formed by the delta and b chains.

It localises to the cell inner membrane. F(1)F(0) ATP synthase produces ATP from ADP in the presence of a proton or sodium gradient. F-type ATPases consist of two structural domains, F(1) containing the extramembraneous catalytic core and F(0) containing the membrane proton channel, linked together by a central stalk and a peripheral stalk. During catalysis, ATP synthesis in the catalytic domain of F(1) is coupled via a rotary mechanism of the central stalk subunits to proton translocation. In terms of biological role, this protein is part of the stalk that links CF(0) to CF(1). It either transmits conformational changes from CF(0) to CF(1) or is implicated in proton conduction. This chain is ATP synthase subunit delta, found in Burkholderia mallei (strain NCTC 10247).